The chain runs to 140 residues: Nucleoside diphosphate kinase (140 aa).

Residues K11, F59, R87, T93, R104, and N114 each contribute to the ATP site. The active-site Pros-phosphohistidine intermediate is the H117.

The protein belongs to the NDK family. As to quaternary structure, homotetramer. Mg(2+) serves as cofactor.

Its subcellular location is the cytoplasm. It carries out the reaction a 2'-deoxyribonucleoside 5'-diphosphate + ATP = a 2'-deoxyribonucleoside 5'-triphosphate + ADP. It catalyses the reaction a ribonucleoside 5'-diphosphate + ATP = a ribonucleoside 5'-triphosphate + ADP. Functionally, major role in the synthesis of nucleoside triphosphates other than ATP. The ATP gamma phosphate is transferred to the NDP beta phosphate via a ping-pong mechanism, using a phosphorylated active-site intermediate. This Francisella tularensis subsp. holarctica (strain LVS) protein is Nucleoside diphosphate kinase.